The following is a 492-amino-acid chain: N-succinylglutamate 5-semialdehyde dehydrogenase (492 aa).

Residue 220 to 225 participates in NAD(+) binding; sequence GSANTG. Residues Glu243 and Cys277 contribute to the active site.

It belongs to the aldehyde dehydrogenase family. AstD subfamily.

It carries out the reaction N-succinyl-L-glutamate 5-semialdehyde + NAD(+) + H2O = N-succinyl-L-glutamate + NADH + 2 H(+). It participates in amino-acid degradation; L-arginine degradation via AST pathway; L-glutamate and succinate from L-arginine: step 4/5. Its function is as follows. Catalyzes the NAD-dependent reduction of succinylglutamate semialdehyde into succinylglutamate. The protein is N-succinylglutamate 5-semialdehyde dehydrogenase of Escherichia coli O157:H7.